The chain runs to 282 residues: Aminoglycoside 6-adenylyltransferase (282 aa).

The catalysed reaction is streptomycin + ATP = 6-O-adenylylstreptomycin + diphosphate. Functionally, required for streptomycin resistance. Adenylates streptomycin on the O-6 residue. The protein is Aminoglycoside 6-adenylyltransferase of Staphylococcus aureus.